The chain runs to 351 residues: LETM1 domain-containing protein 1 (351 aa).

The Cytoplasmic portion of the chain corresponds to 1-130 (MLSGMALCRT…FRRDIIKAAP (130 aa)). Residues 131–151 (VVIISIPPFANYLVFVLMYFF) traverse the membrane as a helical segment. Residues 152–351 (PRQLLIRHFW…SANYLQSIKQ (200 aa)) are Mitochondrial intermembrane-facing. The Letm1 RBD domain occupies 172-351 (IYHRMRVEAY…SANYLQSIKQ (180 aa)).

Its subcellular location is the mitochondrion outer membrane. The protein localises to the nucleus. The protein resides in the mitochondrion inner membrane. Functionally, may play an essential role for mitochondrial structure and function. The chain is LETM1 domain-containing protein 1 from Xenopus tropicalis (Western clawed frog).